The chain runs to 1305 residues: Adenylate cyclase type 9 (1305 aa).

The Cytoplasmic portion of the chain corresponds to 1–110 (MASPVNQQLL…CFPQTQRRFR (110 aa)). Residues 46–55 (ISSSCSSGES) are compositionally biased toward low complexity. Residues 46–71 (ISSSCSSGESGVKKTGGSGGARRQKK) are disordered. A helical membrane pass occupies residues 111–131 (YALMYLSVAGLLWSIYFSVHM). The Extracellular portion of the chain corresponds to 132–134 (KTK). The chain crosses the membrane as a helical span at residues 135–155 (LVSHLVPTLCFLIVCLGFFFF). At 156 to 164 (TFTKSYARH) the chain is on the cytoplasmic side. The helical transmembrane segment at 165–185 (CTAISLLVTLLVFTLTLASQF) threads the bilayer. Topologically, residues 186-209 (QVLNPGLGSDSLSNLTSFSATGSS) are extracellular. Asn199 is a glycosylation site (N-linked (GlcNAc...) asparagine). The helical transmembrane segment at 210–229 (SCLSQVGSFSICVEVLLLLY) threads the bilayer. Topologically, residues 230–235 (TVMHLP) are cytoplasmic. A helical membrane pass occupies residues 236–253 (LYLSACLGVAYSILFETF). The Extracellular portion of the chain corresponds to 254–274 (GYHFRDESCFVLLVGRMAHWE). The chain crosses the membrane as a helical span at residues 275 to 295 (LLSKALLHVCIHAIGVHLFIM). The Cytoplasmic segment spans residues 296–778 (SEVRSRSTFL…VKTFASATFS (483 aa)). The segment at 343–369 (QGDDESENSVKRHSASSPKSRKKKSSI) is disordered. The span at 353–368 (KRHSASSPKSRKKKSS) shows a compositional bias: basic residues. Asp393, Ile394, and Asp437 together coordinate Mg(2+). Residues 393–398 (DIVGFT), 435–437 (LGD), and Arg481 each bind ATP. Polar residues-rich tracts occupy residues 607-618 (SDSHTNCTQPET) and 670-680 (ESSTGDTLTNS). The segment at 607–680 (SDSHTNCTQP…SSTGDTLTNS (74 aa)) is disordered. The helical transmembrane segment at 779–799 (SLQDVLLNYFIFVLLSVACLL) threads the bilayer. At 800 to 810 (KPGTNTVSPPT) the chain is on the extracellular side. The chain crosses the membrane as a helical span at residues 811-831 (LALVLLSVCGLLGFLSLLVSV). The Cytoplasmic portion of the chain corresponds to 832–859 (RMAFYLEDMLLCTRRLLEIISGWVPRHF). The chain crosses the membrane as a helical span at residues 860 to 880 (IGTVLVCLPAAVIFSYLSSDF). Residues 881–883 (YTD) lie on the Extracellular side of the membrane. Residues 884–904 (IHYTMFLCSALLIPMVQYCNF) traverse the membrane as a helical segment. At 905–911 (CQLSSSA) the chain is on the cytoplasmic side. The chain crosses the membrane as a helical span at residues 912 to 932 (LLLATITGATMLILIYLPLCP). The Extracellular portion of the chain corresponds to 933–966 (QRPPLDPGTDIEANLSTSNSSYETLDNPRTELPF). Residues Asn946 and Asn951 are each glycosylated (N-linked (GlcNAc...) asparagine). A helical transmembrane segment spans residues 967–987 (TRLGQEIAVAYFLLLLLVWFL). The Cytoplasmic segment spans residues 988–1305 (NREFDVSYRL…EERGRDGGAR (318 aa)). ATP contacts are provided by residues Lys1099, 1176 to 1178 (DIW), 1183 to 1187 (NIASR), and Lys1223. The tract at residues 1261–1305 (SIGRSPTDEISSLVTGGKGAVELGSGEAERKREKAEERGRDGGAR) is disordered. Basic and acidic residues predominate over residues 1287–1305 (EAERKREKAEERGRDGGAR).

It belongs to the adenylyl cyclase class-4/guanylyl cyclase family. Mg(2+) serves as cofactor. Mn(2+) is required as a cofactor. Detected in oocytes.

The protein localises to the cell membrane. It carries out the reaction ATP = 3',5'-cyclic AMP + diphosphate. Adenylyl cyclase that catalyzes the formation of the signaling molecule cAMP in response to activation of G protein-coupled receptors. In Xenopus laevis (African clawed frog), this protein is Adenylate cyclase type 9 (adcy9).